The sequence spans 163 residues: Probable chemoreceptor glutamine deamidase CheD (163 aa).

The protein belongs to the CheD family.

It carries out the reaction L-glutaminyl-[protein] + H2O = L-glutamyl-[protein] + NH4(+). Probably deamidates glutamine residues to glutamate on methyl-accepting chemotaxis receptors (MCPs), playing an important role in chemotaxis. In Borreliella burgdorferi (strain ATCC 35210 / DSM 4680 / CIP 102532 / B31) (Borrelia burgdorferi), this protein is Probable chemoreceptor glutamine deamidase CheD.